A 259-amino-acid polypeptide reads, in one-letter code: TLC domain-containing protein 4 (259 aa).

A run of 6 helical transmembrane segments spans residues 6–26 (FISY…FSII), 53–73 (CVST…LAYD), 86–106 (FWVK…LLLL), 117–133 (YMVC…GYVL), 172–192 (PVLL…IAVI), and 213–233 (IGPQ…NVFW). The region spanning 44-246 (GKQCEWDSRC…IARGFYKVVK (203 aa)) is the TLC domain.

The protein belongs to the TLCD4 family.

Its subcellular location is the membrane. This Xenopus tropicalis (Western clawed frog) protein is TLC domain-containing protein 4 (tlcd4).